A 359-amino-acid polypeptide reads, in one-letter code: Fructose-bisphosphate aldolase class 2 (359 aa).

Position 50 (serine 50) interacts with D-glyceraldehyde 3-phosphate. Aspartate 83 acts as the Proton donor in catalysis. Residues histidine 84, aspartate 105, glutamate 142, and histidine 198 each contribute to the Zn(2+) site. Residue glycine 199 coordinates dihydroxyacetone phosphate. Histidine 232 is a binding site for Zn(2+). Dihydroxyacetone phosphate contacts are provided by residues 233–235 (GSS) and 275–278 (NIDT).

The protein belongs to the class II fructose-bisphosphate aldolase family. Requires Zn(2+) as cofactor.

The enzyme catalyses beta-D-fructose 1,6-bisphosphate = D-glyceraldehyde 3-phosphate + dihydroxyacetone phosphate. The protein operates within carbohydrate degradation; glycolysis; D-glyceraldehyde 3-phosphate and glycerone phosphate from D-glucose: step 4/4. Its function is as follows. Catalyzes the aldol condensation of dihydroxyacetone phosphate (DHAP or glycerone-phosphate) with glyceraldehyde 3-phosphate (G3P) to form fructose 1,6-bisphosphate (FBP) in gluconeogenesis and the reverse reaction in glycolysis. The sequence is that of Fructose-bisphosphate aldolase class 2 (fbaA) from Synechocystis sp. (strain ATCC 27184 / PCC 6803 / Kazusa).